Reading from the N-terminus, the 493-residue chain is Protein translocase subunit SecY (493 aa).

Residues 1 to 21 (MDSVIRALQPYFERIPSVERP) are Cytoplasmic-facing. The chain crosses the membrane as a helical span at residues 22–48 (KGHVHFREKFGWTAAILLLYFILSNVP). Topologically, residues 49-59 (VFGLSPESIDI) are extracellular. Positions 60-67 (FAAYRALF) form an intramembrane region, helical. A discontinuously helical transmembrane segment spans residues 60–88 (FAAYRALFAGSTGSIIALGIGPIVTASII). The stretch at 68-79 (AGSTGSIIALGI) is an intramembrane region. Residues 80–88 (GPIVTASII) constitute an intramembrane region (helical). Residues 89–109 (LQLLVGAGIIKLDLTNPEDRA) are Cytoplasmic-facing. Residues 110–134 (AYQDFQRFLVFVMIAVEAIPQIAGG) traverse the membrane as a helical segment. Topologically, residues 135–151 (LLKPDLNLAAQLGVSPG) are extracellular. The chain crosses the membrane as a helical span at residues 152 to 176 (IISFLIFIQLFIGGVLIVYMDEVVS). Topologically, residues 177–182 (KWGIGS) are cytoplasmic. A helical transmembrane segment spans residues 183-201 (GVSLFILAGIAQSIVVGLF). Residues 202–244 (NWVIPPNSAMPAGIIPRWIWIAQNYPLDQLFTGSGLAFLLIQG) lie on the Extracellular side of the membrane. A helical transmembrane segment spans residues 245–266 (GILALITTAAIILLVVFFEGTR). Residues 267–291 (VEIPLAHAVARGARGRFPIKLIYAS) lie on the Cytoplasmic side of the membrane. Residues 292–313 (VLPMIFVRALQANVVALGQVLH) form a helical membrane-spanning segment. Over 314 to 367 (ARGVTIFGEFVNGKAVSGLMFFLQPVSSPYDWIPSLVKSQGAAFAAIPDWMIYL) the chain is Extracellular. The helical transmembrane segment at 368-387 (HLLIDALILVVGGIIFAWFW) threads the bilayer. At 388-430 (VETSGMDARTVASQIAKSGMQVPGFRKSPQVLERVLSRYIPKV) the chain is on the cytoplasmic side. A helical transmembrane segment spans residues 431-449 (TILGGAIIGILTLVANMLG). At 450–454 (TIGNV) the chain is on the extracellular side. Residues 455–469 (SGTGLLLAVSIAYRF) traverse the membrane as a helical segment. Residues 470–493 (YEDLAKEQLTEMHPLIRRMLGEEA) are Cytoplasmic-facing.

This sequence belongs to the SecY/SEC61-alpha family. In terms of assembly, component of the Sec protein translocase complex. Heterotrimer consisting of alpha (SecY), beta (SecG) and gamma (SecE) subunits. The heterotrimers can form oligomers, although 1 heterotrimer is thought to be able to translocate proteins. Interacts with the ribosome. May interact with SecDF, and other proteins may be involved.

It localises to the cell membrane. In terms of biological role, the central subunit of the protein translocation channel SecYEG. Consists of two halves formed by TMs 1-5 and 6-10. These two domains form a lateral gate at the front which open onto the bilayer between TMs 2 and 7, and are clamped together by SecE at the back. The channel is closed by both a pore ring composed of hydrophobic SecY resides and a short helix (helix 2A) on the extracellular side of the membrane which forms a plug. The plug probably moves laterally to allow the channel to open. The ring and the pore may move independently. The chain is Protein translocase subunit SecY from Archaeoglobus fulgidus (strain ATCC 49558 / DSM 4304 / JCM 9628 / NBRC 100126 / VC-16).